The following is a 243-amino-acid chain: Carboxy-S-adenosyl-L-methionine synthase (243 aa).

S-adenosyl-L-methionine-binding positions include Y40, 65–67 (GCS), 90–91 (DN), 118–119 (DI), N133, and R200.

It belongs to the class I-like SAM-binding methyltransferase superfamily. Cx-SAM synthase family. Homodimer.

It carries out the reaction prephenate + S-adenosyl-L-methionine = carboxy-S-adenosyl-L-methionine + 3-phenylpyruvate + H2O. In terms of biological role, catalyzes the conversion of S-adenosyl-L-methionine (SAM) to carboxy-S-adenosyl-L-methionine (Cx-SAM). The polypeptide is Carboxy-S-adenosyl-L-methionine synthase (Shewanella woodyi (strain ATCC 51908 / MS32)).